The primary structure comprises 251 residues: Hydroxyacylglutathione hydrolase (251 aa).

His53, His55, Asp57, His58, His110, Asp127, and His165 together coordinate Zn(2+).

The protein belongs to the metallo-beta-lactamase superfamily. Glyoxalase II family. In terms of assembly, monomer. Zn(2+) is required as a cofactor.

The catalysed reaction is an S-(2-hydroxyacyl)glutathione + H2O = a 2-hydroxy carboxylate + glutathione + H(+). The protein operates within secondary metabolite metabolism; methylglyoxal degradation; (R)-lactate from methylglyoxal: step 2/2. Thiolesterase that catalyzes the hydrolysis of S-D-lactoyl-glutathione to form glutathione and D-lactic acid. The protein is Hydroxyacylglutathione hydrolase of Cronobacter sakazakii (strain ATCC BAA-894) (Enterobacter sakazakii).